The following is a 207-amino-acid chain: Large ribosomal subunit protein bL25 (207 aa).

Positions 185-207 (DLEEETGEAAAEAEAPAEEGAES) are disordered.

Belongs to the bacterial ribosomal protein bL25 family. CTC subfamily. As to quaternary structure, part of the 50S ribosomal subunit; part of the 5S rRNA/L5/L18/L25 subcomplex. Contacts the 5S rRNA. Binds to the 5S rRNA independently of L5 and L18.

Functionally, this is one of the proteins that binds to the 5S RNA in the ribosome where it forms part of the central protuberance. The polypeptide is Large ribosomal subunit protein bL25 (Rhodococcus jostii (strain RHA1)).